The sequence spans 432 residues: Enolase (432 aa).

Gln163 serves as a coordination point for (2R)-2-phosphoglycerate. The active-site Proton donor is Glu205. The Mg(2+) site is built by Asp242, Glu285, and Asp312. 4 residues coordinate (2R)-2-phosphoglycerate: Lys337, Arg366, Ser367, and Lys388. Lys337 (proton acceptor) is an active-site residue.

This sequence belongs to the enolase family. Mg(2+) serves as cofactor.

It is found in the cytoplasm. Its subcellular location is the secreted. The protein localises to the cell surface. The enzyme catalyses (2R)-2-phosphoglycerate = phosphoenolpyruvate + H2O. The protein operates within carbohydrate degradation; glycolysis; pyruvate from D-glyceraldehyde 3-phosphate: step 4/5. Its function is as follows. Catalyzes the reversible conversion of 2-phosphoglycerate (2-PG) into phosphoenolpyruvate (PEP). It is essential for the degradation of carbohydrates via glycolysis. The polypeptide is Enolase (Bifidobacterium longum subsp. infantis (strain ATCC 15697 / DSM 20088 / JCM 1222 / NCTC 11817 / S12)).